Reading from the N-terminus, the 119-residue chain is Aspartate 1-decarboxylase (119 aa).

Ser25 functions as the Schiff-base intermediate with substrate; via pyruvic acid in the catalytic mechanism. At Ser25 the chain carries Pyruvic acid (Ser). A substrate-binding site is contributed by Thr57. Tyr58 (proton donor) is an active-site residue. 73 to 75 (GAA) provides a ligand contact to substrate.

The protein belongs to the PanD family. Heterooctamer of four alpha and four beta subunits. Requires pyruvate as cofactor. Is synthesized initially as an inactive proenzyme, which is activated by self-cleavage at a specific serine bond to produce a beta-subunit with a hydroxyl group at its C-terminus and an alpha-subunit with a pyruvoyl group at its N-terminus.

It localises to the cytoplasm. The catalysed reaction is L-aspartate + H(+) = beta-alanine + CO2. Its pathway is cofactor biosynthesis; (R)-pantothenate biosynthesis; beta-alanine from L-aspartate: step 1/1. In terms of biological role, catalyzes the pyruvoyl-dependent decarboxylation of aspartate to produce beta-alanine. In Desulfotalea psychrophila (strain LSv54 / DSM 12343), this protein is Aspartate 1-decarboxylase.